We begin with the raw amino-acid sequence, 930 residues long: Serine/threonine-protein kinase PknD (930 aa).

In terms of domain architecture, Protein kinase spans tyrosine 4–leucine 291. Residues isoleucine 10 to valine 18 and lysine 33 each bind ATP. The active-site Proton acceptor is aspartate 138.

This sequence belongs to the protein kinase superfamily. Ser/Thr protein kinase family. Post-translationally, autophosphorylated on serine and threonine residues.

It catalyses the reaction L-seryl-[protein] + ATP = O-phospho-L-seryl-[protein] + ADP + H(+). The enzyme catalyses L-threonyl-[protein] + ATP = O-phospho-L-threonyl-[protein] + ADP + H(+). Functionally, together with the serine/threonine kinase Pkn1, may play a role in the specific interactions with host proteins during intracellular growth. The protein is Serine/threonine-protein kinase PknD of Chlamydia caviae (strain ATCC VR-813 / DSM 19441 / 03DC25 / GPIC) (Chlamydophila caviae).